A 1216-amino-acid polypeptide reads, in one-letter code: 1-phosphatidylinositol 4,5-bisphosphate phosphodiesterase beta-1 (1216 aa).

Cysteine 17 carries S-palmitoyl cysteine lipidation. Serine 236 is modified (phosphoserine). A PI-PLC X-box domain is found at 316–467 (EDMSQPLSHY…LMYKILVKNK (152 aa)). Catalysis depends on residues histidine 331 and histidine 378. Serine 417 carries the post-translational modification Phosphoserine. The disordered stretch occupies residues 469 to 534 (KSHKSSEGSG…MDEGTAGSEA (66 aa)). The span at 472–483 (KSSEGSGKKKLS) shows a compositional bias: basic and acidic residues. Positions 491–501 (SDSSSVFEPSS) are enriched in low complexity. The segment covering 507-518 (ADTESDDDDDDD) has biased composition (acidic residues). A Phosphothreonine modification is found at threonine 509. Serine 511 and serine 582 each carry phosphoserine. The PI-PLC Y-box domain occupies 540–656 (MSNLVNYIQP…GYRLKPEFMR (117 aa)). The region spanning 656–784 (RRPDKHFDPF…CLRNERNQPL (129 aa)) is the C2 domain. Disordered stretches follow at residues 834 to 891 (DEEE…VKAP), 933 to 993 (LVKR…IEQD), 1071 to 1095 (KMDK…EEEK), and 1172 to 1216 (KISE…DTPL). Serine 887 is modified (phosphoserine; by PKC). Basic and acidic residues-rich tracts occupy residues 941-951 (TTDLIKEHTTK) and 959-979 (YLRR…KKSE). 2 positions are modified to phosphoserine: serine 978 and serine 987. The span at 980–991 (PSSPDHVSSTIE) shows a compositional bias: polar residues. Positions 1075 to 1095 (KRQEKITEAKSKDKSQMEEEK) are enriched in basic and acidic residues. Positions 1187-1198 (TSDSGKLNQKPP) are enriched in polar residues. Phosphoserine occurs at positions 1199 and 1200. Residues 1207–1216 (NPGKEFDTPL) are compositionally biased toward basic and acidic residues.

As to quaternary structure, interacts with DGKQ. The cofactor is Ca(2+). In terms of processing, palmitoylated. Palmitoylation at Cys-17 by ZDHHC21 regulates the signaling activity of PLCB1 and the function of the endothelial barrier. Palmitoylation by ZDHHC21 is stimulated by inflammation.

The protein resides in the nucleus membrane. It is found in the cytoplasm. The enzyme catalyses a 1,2-diacyl-sn-glycero-3-phospho-(1D-myo-inositol-4,5-bisphosphate) + H2O = 1D-myo-inositol 1,4,5-trisphosphate + a 1,2-diacyl-sn-glycerol + H(+). It catalyses the reaction a 1,2-diacyl-sn-glycero-3-phospho-(1D-myo-inositol) + H2O = 1D-myo-inositol 1-phosphate + a 1,2-diacyl-sn-glycerol + H(+). Its function is as follows. Catalyzes the hydrolysis of 1-phosphatidylinositol 4,5-bisphosphate into diacylglycerol (DAG) and inositol 1,4,5-trisphosphate (IP3) and mediates intracellular signaling downstream of G protein-coupled receptors. Regulates the function of the endothelial barrier. The chain is 1-phosphatidylinositol 4,5-bisphosphate phosphodiesterase beta-1 (PLCB1) from Bos taurus (Bovine).